A 114-amino-acid chain; its full sequence is Hemerythrin subunit 1 (114 aa).

Positions 26, 55, 59, 74, 78, 102, and 107 each coordinate Fe cation.

Belongs to the hemerythrin family.

Functionally, hemerythrin is a respiratory protein in blood cells of certain marine worms. The oxygen-binding site in each chain contains two iron atoms. In Golfingia vulgaris (Marine worm), this protein is Hemerythrin subunit 1.